We begin with the raw amino-acid sequence, 436 residues long: Chaperone SurA (436 aa).

A signal peptide spans 1–30 (MKFFQRPERRLKQWGLALLLAASALLPARA). PpiC domains follow at residues 180 to 281 (ETEY…KLVD) and 291 to 389 (VTQT…QVLE).

Its subcellular location is the periplasm. It carries out the reaction [protein]-peptidylproline (omega=180) = [protein]-peptidylproline (omega=0). In terms of biological role, chaperone involved in the correct folding and assembly of outer membrane proteins. Recognizes specific patterns of aromatic residues and the orientation of their side chains, which are found more frequently in integral outer membrane proteins. May act in both early periplasmic and late outer membrane-associated steps of protein maturation. The polypeptide is Chaperone SurA (Thiobacillus denitrificans (strain ATCC 25259 / T1)).